Consider the following 178-residue polypeptide: Probable DNA-directed RNA polymerase subunit delta (178 aa).

Residues 14-81 enclose the HTH HARE-type domain; sequence LSMIEVAHAI…GENTWGLRTW (68 aa). Over residues 120–143 the composition is skewed to acidic residues; that stretch reads DDDVIDYDSDDPEDEEVEAEDTTS. A disordered region spans residues 120–178; it reads DDDVIDYDSDDPEDEEVEAEDTTSDDAPAFEDLSNDDDTDVLPDGIEGQLSELNEDDEN.

Belongs to the RpoE family. As to quaternary structure, RNAP is composed of a core of 2 alpha, a beta and a beta' subunits. The core is associated with a delta subunit and one of several sigma factors.

Participates in both the initiation and recycling phases of transcription. In the presence of the delta subunit, RNAP displays an increased specificity of transcription, a decreased affinity for nucleic acids, and an increased efficiency of RNA synthesis because of enhanced recycling. The polypeptide is Probable DNA-directed RNA polymerase subunit delta (Pediococcus pentosaceus (strain ATCC 25745 / CCUG 21536 / LMG 10740 / 183-1w)).